We begin with the raw amino-acid sequence, 280 residues long: Ribosomal RNA-processing protein 7 homolog A (280 aa).

Residues 59-159 (RTLFVLNVPP…SGIHKWISDY (101 aa)) enclose the RRM domain. A Phosphoserine modification is found at serine 99.

The protein belongs to the RRP7 family. In terms of assembly, part of the small subunit (SSU) processome, composed of more than 70 proteins and the RNA chaperone small nucleolar RNA (snoRNA) U3. Interacts with NOL6; required for NOL6 localization to nucleolus. Expressed in the apical radial glial cells in the developing brain.

The protein localises to the nucleus. It is found in the nucleolus. Its subcellular location is the cell projection. It localises to the cilium. The protein resides in the cytoplasm. The protein localises to the cytoskeleton. It is found in the microtubule organizing center. Its subcellular location is the centrosome. Functionally, nucleolar protein that is involved in ribosomal RNA (rRNA) processing. Also plays a role in primary cilia resorption, and cell cycle progression in neurogenesis and neocortex development. Part of the small subunit (SSU) processome, first precursor of the small eukaryotic ribosomal subunit. During the assembly of the SSU processome in the nucleolus, many ribosome biogenesis factors, an RNA chaperone and ribosomal proteins associate with the nascent pre-rRNA and work in concert to generate RNA folding, modifications, rearrangements and cleavage as well as targeted degradation of pre-ribosomal RNA by the RNA exosome. This chain is Ribosomal RNA-processing protein 7 homolog A, found in Homo sapiens (Human).